We begin with the raw amino-acid sequence, 465 residues long: SHC-transforming protein 1 (465 aa).

In terms of domain architecture, PID spans 44–227 (MGPGVPYLVR…AGFDGSAWDE (184 aa)). The tract at residues 228–369 (EEEELPDHAY…SMEDQLKREP (142 aa)) is CH1. Residues 281-315 (VSGAEQDSRKMQPTLQGRERFPVPCSRPPNRPDLF) are disordered. Residues 370-461 (WYQGKMSRKE…GSELCLQQPV (92 aa)) enclose the SH2 domain.

In terms of assembly, interacts with grb2. As to expression, highly expressed in oocytes and embryo. Also expressed in liver. Detected in ovary, testis and heart and to a lesser extent in liver (at protein level).

The protein localises to the cytoplasm. Functionally, implicated in ras-dependent oocyte maturation induced by insulin/IGF1. In Xenopus laevis (African clawed frog), this protein is SHC-transforming protein 1 (shc1).